The sequence spans 323 residues: Fructokinase-1 (323 aa).

This sequence belongs to the carbohydrate kinase PfkB family. As to expression, expressed in stems, at higher levels in roots, and hardly detectable in leaves.

The enzyme catalyses D-fructose + ATP = D-fructose 6-phosphate + ADP + H(+). It functions in the pathway glycan biosynthesis; starch biosynthesis. With respect to regulation, inhibited at high fructose. Functionally, may play an important role in maintaining the flux of carbon towards starch formation in endosperm. May also be involved in a sugar-sensing pathway. The sequence is that of Fructokinase-1 (FRK1) from Zea mays (Maize).